Reading from the N-terminus, the 460-residue chain is Muscarinic acetylcholine receptor M1 (460 aa).

The Extracellular portion of the chain corresponds to 1–22 (MNTSAPPAVSPNITVLAPGKGP). Residues Asn-2 and Asn-12 are each glycosylated (N-linked (GlcNAc...) asparagine). The helical transmembrane segment at 23-48 (WQVAFIGITTGLLSLATVTGNLLVLI) threads the bilayer. At 49-62 (SFKVNTELKTVNNY) the chain is on the cytoplasmic side. The helical transmembrane segment at 63 to 84 (FLLSLACADLIIGTFSMNLYTT) threads the bilayer. Topologically, residues 85 to 95 (YLLMGHWALGT) are extracellular. A helical membrane pass occupies residues 96–121 (LACDLWLALDYVASNASVMNLLLISF). Cys-98 and Cys-178 are joined by a disulfide. Topologically, residues 122-142 (DRYFSVTRPLSYRAKRTPRRA) are cytoplasmic. Residues 143–164 (ALMIGLAWLVSFVLWAPAILFW) form a helical membrane-spanning segment. Residues 165–185 (QYLVGERTVLAGQCYIQFLSQ) are Extracellular-facing. A helical membrane pass occupies residues 186 to 209 (PIITFGTAMAAFYLPVTVMCTLYW). At 210–366 (RIYRETENRA…LVKEKKAART (157 aa)) the chain is on the cytoplasmic side. 3 disordered regions span residues 225–256 (LQGSETPGKGGGSSSSSERSQPGAEGSPETPP), 274–297 (WKEEEEEDEGSMESLTSSEGEEPG), and 310–351 (EAQA…QLAK). Thr-230 is subject to Phosphothreonine. Residues 238–247 (SSSSERSQPG) are compositionally biased toward low complexity. Residues 328-343 (RPTKKGRDRAGKGQKP) show a composition bias toward basic residues. Residues 367–390 (LSAILLAFILTWTPYNIMVLVSTF) traverse the membrane as a helical segment. Residues 391-397 (CKDCVPE) are Extracellular-facing. Residues 398 to 420 (TLWELGYWLCYVNSTINPMCYAL) form a helical membrane-spanning segment. Topologically, residues 421–460 (CNKAFRDTFRLLLLCRWDKRRWRKIPKRPGSVHRTPSRQC) are cytoplasmic. Thr-428 carries the phosphothreonine modification. Ser-451 carries the post-translational modification Phosphoserine. Thr-455 is modified (phosphothreonine). A Phosphoserine modification is found at Ser-457.

It belongs to the G-protein coupled receptor 1 family. Muscarinic acetylcholine receptor subfamily. CHRM1 sub-subfamily. Interacts with GPRASP2. Interacts with TMEM147.

It localises to the cell membrane. Its subcellular location is the postsynaptic cell membrane. In terms of biological role, the muscarinic acetylcholine receptor mediates various cellular responses, including inhibition of adenylate cyclase, breakdown of phosphoinositides and modulation of potassium channels through the action of G proteins. Primary transducing effect is Pi turnover. In Homo sapiens (Human), this protein is Muscarinic acetylcholine receptor M1 (CHRM1).